A 66-amino-acid chain; its full sequence is Rho-elapitoxin-Da1b (66 aa).

Intrachain disulfides connect Cys3–Cys24, Cys17–Cys42, Cys46–Cys58, and Cys59–Cys64.

This sequence belongs to the three-finger toxin family. Short-chain subfamily. Aminergic toxin sub-subfamily. In terms of tissue distribution, expressed by the venom gland.

The protein localises to the secreted. Non-competitive antagonist of alpha-2 adrenergic receptors (ADRA2) in smooth muscles, and partial antagonist of D3 dopamine receptors (DRD3) (inhibits 25% of methylspiperone binding to this receptor). Also shows a low antagonism on D2 dopamine receptors (DRD2) (short isoform). Shows high affinity to adrenergic receptors (Ki=14 nM (ADRA2A), Ki=73 nM (ADRA2B), and Ki=38 nM (ADRA2C)). Increases heart rate and blood catecholamine concentrations. This chain is Rho-elapitoxin-Da1b, found in Dendroaspis angusticeps (Eastern green mamba).